A 675-amino-acid chain; its full sequence is Acetyl-coenzyme A synthetase 2 (675 aa).

CoA is bound by residues 206–209 (RGGK) and Thr325. ATP contacts are provided by residues 401 to 403 (GEP), 425 to 430 (DTMWQT), Asp516, and Arg531. Ser539 is a CoA binding site. ATP is bound at residue Arg542. Arg604 contacts CoA.

Belongs to the ATP-dependent AMP-binding enzyme family.

It catalyses the reaction acetate + ATP + CoA = acetyl-CoA + AMP + diphosphate. This Zygosaccharomyces bailii protein is Acetyl-coenzyme A synthetase 2 (ACS2).